We begin with the raw amino-acid sequence, 205 residues long: Mitotic spindle assembly checkpoint protein MAD2A (205 aa).

Alanine 2 carries the N-acetylalanine modification. Residues 14–197 (RGSAEIVAEF…TTIHKVNSMV (184 aa)) enclose the HORMA domain. Serine 130, serine 170, serine 185, and serine 195 each carry phosphoserine. The interval 195–205 (SMVAYKTPVND) is required for assuming the closed conformation and for interaction with CDC20.

It belongs to the MAD2 family. In terms of assembly, monomer and homodimer. Heterodimerizes with MAD2L1 in order to form a tetrameric MAD1L1-MAD2L1 core complex. In the closed and open conformation, interacts with MAD1L1. Formation of a heterotetrameric core complex containing two molecules each of MAD1L1 and of MAD2L1 promotes binding of another molecule of MAD2L1 to each MAD2L1, resulting in a heterohexamer. Interacts with MAD2L1BP. Interacts with ADAM17/TACE. Interacts with CDC20. Dimeric MAD2L1 in the closed conformation interacts with CDC20. Monomeric MAD2L1 in the open conformation does not interact with CDC20. CDC20 competes with MAD1L1 for MAD2L1 binding. In the closed conformation, interacts with BUB1B. Interacts with TTK. Interacts with TPR. Binds to UBD (via ubiquitin-like 1 domain) during mitosis. Interacts with isoform 1 and isoform 2 of NEK2. Interacts with HSF1; this interaction occurs in mitosis. Post-translationally, phosphorylated on multiple serine residues. The level of phosphorylation varies during the cell cycle and is highest during mitosis. Phosphorylation abolishes interaction with MAD1L1 and reduces interaction with CDC20. Phosphorylated by NEK2.

The protein localises to the nucleus. It localises to the chromosome. The protein resides in the centromere. Its subcellular location is the kinetochore. It is found in the cytoplasm. The protein localises to the cytoskeleton. It localises to the spindle pole. Component of the spindle-assembly checkpoint that prevents the onset of anaphase until all chromosomes are properly aligned at the metaphase plate. In the closed conformation (C-MAD2) forms a heterotetrameric complex with MAD1L1 at unattached kinetochores during prometaphase, and recruits an open conformation of MAD2L1 (O-MAD2) which then promotes the conversion of O-MAD2 to C-MAD2. Required for the execution of the mitotic checkpoint which monitors the process of kinetochore-spindle attachment and inhibits the activity of the anaphase promoting complex by sequestering CDC20 until all chromosomes are aligned at the metaphase plate. The polypeptide is Mitotic spindle assembly checkpoint protein MAD2A (Mad2l1) (Mus musculus (Mouse)).